Here is a 122-residue protein sequence, read N- to C-terminus: Large ribosomal subunit protein uL14c (122 aa).

This sequence belongs to the universal ribosomal protein uL14 family. Part of the 50S ribosomal subunit.

Its subcellular location is the plastid. It localises to the chloroplast. In terms of biological role, binds to 23S rRNA. The protein is Large ribosomal subunit protein uL14c of Lotus japonicus (Lotus corniculatus var. japonicus).